A 1198-amino-acid polypeptide reads, in one-letter code: MFSNFFGSSKRNTIASSSSSSKKDKDNGKDESSKLKNSGSSTLPKPITNNESGNNFITSPSVSSPLISPLSSSPSPLLSSSSNSIQSTSHQQQQQHQGVITSLQMKPSCTSLTDDIEKKKQAKYDSSLEQTARKWVCDVLEIQLEDDKTFYELFKNGVLLCRLINKLRGGTIKRINESTISFKQLENIENYLKACKTLGLQSVNLFNSIDLHENKDISLVITNIVVLGKHASKIEGYNGIHLAGERKIIKITTTPVSPLFGGNHNNNNNNNNNNNTSNGDLSPVSITSASGGSSNYNSYSNNPLNKSSNGKKAKWRKSVKIPAVSSLNSDIRTKEAFKFSPELQKAAQDWIEEVTKEKFKLPSFSSSLKDGILLCRVINTIIPNTILYINNGNSSFKKMENIGNYLKGCLVVGLKKTDLFDTPDLFEEKNINFVISNIHVLGNHVNKMYSHLKLPLIKNIGNGGNGGNGGIGGGGGSDGSPLKMYSSIIHSKFGNGSSNTSSGNGGVIIPPEDMKDLKDWINHHLRAHHSLQIGSDMSNDLRNGVTLLTLLEELTLQKVGIFAREPVLPWHFMQNICLLLNFLRENSVHNVSDISPHDLFNGDIHSLCMITRLIRENFDTDHQMKSIPMDTRRQKVIEEIIATEQSYVKSLSTVYNLLIVPLLNSLDTNSPILSNDEISSIFGNWEHLLRSHINLLKEFKLKLNLPFNDLTIDDSNQNQNHNNIFGDSIFDSNITIGDVFLEKCEFLKDNYTNYINNYDNSYQRVKRLKKSNSNFEELVNTFEIFQDTHNGLDLYSYLIMPIQRIVRYILLLKEVIKYTPSTHPDYQMLQNAKENIKRVADHVNESKMAVENKRKILSIQDSIQNLQFNLMDKERTYIREGFLEIEDTFKKDSYFFLFSDLLLFVKYKPSEETGKEFKYKEVFYLDQVVDVSDILSDDEGEACVDGDDDGGEYEGGNGDATSGSADPEDQTLRRSCNSNNNNNSNSNKSNTVYSFEIETCEFSLVLLAESHTEKIEWMEDLRSCLQHQLIKEEDQLSSLSLSDNDDDNDADADVESSLNSISSPLLLLNNNNIINNNNNNNNNNNNNNNNNNNNNNCKNSNININSSIDNNSDNNNNDYDSKINSEENGDSSDEENKTSNRRSVSFKTHKRLESDETISDTESDDYELVCGRSKKSQPPPVPPRKITFSDTIKNIDNQ.

A disordered region spans residues 1-104 (MFSNFFGSSK…QHQGVITSLQ (104 aa)). A compositionally biased stretch (low complexity) spans 8-20 (SSKRNTIASSSSS). The segment covering 21–34 (SKKDKDNGKDESSK) has biased composition (basic and acidic residues). Residues 35 to 58 (LKNSGSSTLPKPITNNESGNNFIT) show a composition bias toward polar residues. The segment covering 59-97 (SPSVSSPLISPLSSSPSPLLSSSSNSIQSTSHQQQQQHQ) has biased composition (low complexity). A Calponin-homology (CH) 1 domain is found at 126–232 (SSLEQTARKW…NIVVLGKHAS (107 aa)). The tract at residues 260–284 (FGGNHNNNNNNNNNNNTSNGDLSPV) is disordered. Positions 263–275 (NHNNNNNNNNNNN) are enriched in low complexity. 2 Calponin-homology (CH) domains span residues 341 to 449 (PELQ…NKMY) and 511 to 619 (PEDM…ENFD). Residues 632-846 (RRQKVIEEII…KRVADHVNES (215 aa)) form the DH domain. The PH domain maps to 876–1026 (TYIREGFLEI…WMEDLRSCLQ (151 aa)). A compositionally biased stretch (acidic residues) spans 940–952 (GEACVDGDDDGGE). 2 disordered regions span residues 940-989 (GEAC…SNKS) and 1076-1198 (NNNN…IDNQ). Composition is skewed to low complexity over residues 977 to 989 (NSNNNNNSNSNKS) and 1076 to 1118 (NNNN…NNND). Acidic residues predominate over residues 1155–1167 (DETISDTESDDYE). The segment covering 1188-1198 (FSDTIKNIDNQ) has biased composition (polar residues).

As to quaternary structure, binds to F-actin.

Its subcellular location is the late endosome. In terms of biological role, involved in the regulation of the late steps of the endocytic pathway. In Dictyostelium discoideum (Social amoeba), this protein is Rac guanine nucleotide exchange factor B (gxcB).